Consider the following 480-residue polypeptide: Probable cobyric acid synthase (480 aa).

The GATase cobBQ-type domain maps to 246-431 (PVRIAVIRLP…MHGLFLNPSA (186 aa)). The active-site Nucleophile is the C325. H423 is a catalytic residue.

It belongs to the CobB/CobQ family. CobQ subfamily.

It participates in cofactor biosynthesis; adenosylcobalamin biosynthesis. Its function is as follows. Catalyzes amidations at positions B, D, E, and G on adenosylcobyrinic A,C-diamide. NH(2) groups are provided by glutamine, and one molecule of ATP is hydrogenolyzed for each amidation. This Methanoregula boonei (strain DSM 21154 / JCM 14090 / 6A8) protein is Probable cobyric acid synthase.